Reading from the N-terminus, the 201-residue chain is Small ribosomal subunit protein uS4 (201 aa).

The disordered stretch occupies residues 22–47; the sequence is TGKELARRPYAPGDHGNDRRGKLSEY. The S4 RNA-binding domain occupies 93-153; that stretch reads RRLDNMVYRL…EKSKNLDVIK (61 aa).

Belongs to the universal ribosomal protein uS4 family. As to quaternary structure, part of the 30S ribosomal subunit. Contacts protein S5. The interaction surface between S4 and S5 is involved in control of translational fidelity.

Functionally, one of the primary rRNA binding proteins, it binds directly to 16S rRNA where it nucleates assembly of the body of the 30S subunit. Its function is as follows. With S5 and S12 plays an important role in translational accuracy. The sequence is that of Small ribosomal subunit protein uS4 from Limosilactobacillus fermentum (strain NBRC 3956 / LMG 18251) (Lactobacillus fermentum).